Reading from the N-terminus, the 297-residue chain is Nucleotide-binding protein BURPS668_0577 (297 aa).

8–15 (GISGSGKS) is a binding site for ATP. 57–60 (DARS) serves as a coordination point for GTP.

It belongs to the RapZ-like family.

Its function is as follows. Displays ATPase and GTPase activities. The sequence is that of Nucleotide-binding protein BURPS668_0577 from Burkholderia pseudomallei (strain 668).